Consider the following 312-residue polypeptide: HTH-type transcriptional regulator TdcA (312 aa).

Residues Pro-7 to Thr-64 form the HTH lysR-type domain. Positions Ile-24–Asn-43 form a DNA-binding region, H-T-H motif.

This sequence belongs to the LysR transcriptional regulatory family.

It participates in amino-acid degradation; L-threonine degradation via propanoate pathway [regulation]. Transcriptional activator for the tdcABCDE operon. This Escherichia coli O157:H7 protein is HTH-type transcriptional regulator TdcA (tdcA).